A 202-amino-acid polypeptide reads, in one-letter code: N-(5'-phosphoribosyl)anthranilate isomerase (202 aa).

The protein belongs to the TrpF family.

It carries out the reaction N-(5-phospho-beta-D-ribosyl)anthranilate = 1-(2-carboxyphenylamino)-1-deoxy-D-ribulose 5-phosphate. It participates in amino-acid biosynthesis; L-tryptophan biosynthesis; L-tryptophan from chorismate: step 3/5. This chain is N-(5'-phosphoribosyl)anthranilate isomerase, found in Listeria monocytogenes serotype 4b (strain CLIP80459).